The following is a 129-amino-acid chain: MSRTKETARAKRTITSKKSKKAPSGASGVKRSHRRWRPGTCAIREIRKFQKSTSLLIQCAPFQRLVRGVERQKEGLRFQSSAIMALQEATEAYIVSLMADTNLACIHAKRVTIQPKDIQLALRLRGERH.

The segment at 1–36 (MSRTKETARAKRTITSKKSKKAPSGASGVKRSHRRW) is disordered. Basic residues predominate over residues 10–21 (AKRTITSKKSKK).

This sequence belongs to the histone H3 family. The nucleosome is a histone octamer containing two molecules each of H2A, H2B, H3 and H4 assembled in one H3-H4 heterotetramer and two H2A-H2B heterodimers. The octamer wraps approximately 147 bp of DNA.

It is found in the nucleus. Its subcellular location is the chromosome. In terms of biological role, core component of nucleosome. Nucleosomes wrap and compact DNA into chromatin, limiting DNA accessibility to the cellular machineries which require DNA as a template. Histones thereby play a central role in transcription regulation, DNA repair, DNA replication and chromosomal stability. DNA accessibility is regulated via a complex set of post-translational modifications of histones, also called histone code, and nucleosome remodeling. The protein is Histone H3 of Leishmania infantum.